The following is a 21-amino-acid chain: MLDGVVARPQEXAARYYAAGY.

Involved in etamycin biosynthesis. The polypeptide is Hydroxypicolinic acid-activating enzyme (Streptomyces griseoviridis).